A 354-amino-acid chain; its full sequence is Histidinol-phosphate aminotransferase (354 aa).

Residue Lys210 is modified to N6-(pyridoxal phosphate)lysine.

It belongs to the class-II pyridoxal-phosphate-dependent aminotransferase family. Histidinol-phosphate aminotransferase subfamily. Homodimer. Pyridoxal 5'-phosphate serves as cofactor.

It carries out the reaction L-histidinol phosphate + 2-oxoglutarate = 3-(imidazol-4-yl)-2-oxopropyl phosphate + L-glutamate. It functions in the pathway amino-acid biosynthesis; L-histidine biosynthesis; L-histidine from 5-phospho-alpha-D-ribose 1-diphosphate: step 7/9. The sequence is that of Histidinol-phosphate aminotransferase from Clostridium botulinum (strain ATCC 19397 / Type A).